The primary structure comprises 664 residues: Glycine--tRNA ligase beta subunit (664 aa).

This sequence belongs to the class-II aminoacyl-tRNA synthetase family. As to quaternary structure, tetramer of two alpha and two beta subunits.

It is found in the cytoplasm. The catalysed reaction is tRNA(Gly) + glycine + ATP = glycyl-tRNA(Gly) + AMP + diphosphate. The chain is Glycine--tRNA ligase beta subunit (glyS) from Aquifex aeolicus (strain VF5).